A 177-amino-acid chain; its full sequence is Bifunctional protein PyrR (177 aa).

A PRPP-binding motif is present at residues Val-99–Thr-111.

Belongs to the purine/pyrimidine phosphoribosyltransferase family. PyrR subfamily.

It carries out the reaction UMP + diphosphate = 5-phospho-alpha-D-ribose 1-diphosphate + uracil. In terms of biological role, regulates the transcription of the pyrimidine nucleotide (pyr) operon in response to exogenous pyrimidines. Its function is as follows. Also displays a weak uracil phosphoribosyltransferase activity which is not physiologically significant. This Microcystis aeruginosa (strain NIES-843 / IAM M-2473) protein is Bifunctional protein PyrR.